The chain runs to 177 residues: MSRIGKKPVQVPAGITATVDGQKVTAKGPKGELFFVANDEISLKLEDNAVVVTPLNQSKNARSKWGMSRTMIEGIFKGVKDGFERKLEINGVGYRAAMQGKNLQLALGFSHDVVYEPPVGITIAVPKPTEIVVSGINKQQVGQVAAEIREYRGPEPYKGKGVKYADERIVRKEGKKK.

The protein belongs to the universal ribosomal protein uL6 family. In terms of assembly, part of the 50S ribosomal subunit.

Its function is as follows. This protein binds to the 23S rRNA, and is important in its secondary structure. It is located near the subunit interface in the base of the L7/L12 stalk, and near the tRNA binding site of the peptidyltransferase center. This is Large ribosomal subunit protein uL6 from Rhizobium etli (strain CIAT 652).